A 127-amino-acid chain; its full sequence is MSKLEKLVEELSTLSVLEAAELSKLLEEKWGVSAAAPVAVAAAGGAAAAPAEAAEEQTEFTVVLVDGGDKKINVIKEVRGVRPDLGLKEAKDLVEGAPQNVVENVSKQQAEEISKKLTEAGAKIQIK.

The protein belongs to the bacterial ribosomal protein bL12 family. In terms of assembly, homodimer. Part of the ribosomal stalk of the 50S ribosomal subunit. Forms a multimeric L10(L12)X complex, where L10 forms an elongated spine to which 2 to 4 L12 dimers bind in a sequential fashion. Binds GTP-bound translation factors.

Forms part of the ribosomal stalk which helps the ribosome interact with GTP-bound translation factors. Is thus essential for accurate translation. The sequence is that of Large ribosomal subunit protein bL12 from Caulobacter vibrioides (strain ATCC 19089 / CIP 103742 / CB 15) (Caulobacter crescentus).